Here is a 90-residue protein sequence, read N- to C-terminus: Probable Fe(2+)-trafficking protein (90 aa).

Belongs to the Fe(2+)-trafficking protein family.

Its function is as follows. Could be a mediator in iron transactions between iron acquisition and iron-requiring processes, such as synthesis and/or repair of Fe-S clusters in biosynthetic enzymes. The chain is Probable Fe(2+)-trafficking protein from Haemophilus influenzae (strain 86-028NP).